We begin with the raw amino-acid sequence, 492 residues long: 3-octaprenyl-4-hydroxybenzoate carboxy-lyase (492 aa).

Residue Asn175 coordinates Mn(2+). Residues 178–180, 192–194, and 197–198 contribute to the prenylated FMN site; these read IYR, RWL, and RG. Residue Glu241 participates in Mn(2+) binding. The active-site Proton donor is Asp290.

Belongs to the UbiD family. Homohexamer. Prenylated FMN serves as cofactor. It depends on Mn(2+) as a cofactor.

The protein localises to the cell membrane. The catalysed reaction is a 4-hydroxy-3-(all-trans-polyprenyl)benzoate + H(+) = a 2-(all-trans-polyprenyl)phenol + CO2. The protein operates within cofactor biosynthesis; ubiquinone biosynthesis. Functionally, catalyzes the decarboxylation of 3-octaprenyl-4-hydroxy benzoate to 2-octaprenylphenol, an intermediate step in ubiquinone biosynthesis. The chain is 3-octaprenyl-4-hydroxybenzoate carboxy-lyase from Salmonella typhimurium (strain LT2 / SGSC1412 / ATCC 700720).